The sequence spans 639 residues: Centromere protein T (639 aa).

Disordered regions lie at residues 1–64 (MDGR…RPNA), 266–294 (QLSD…GLVS), 307–451 (SEKD…ERGT), 458–477 (AAEE…ESEE), and 494–534 (QPVL…TREP). Residues 12 to 23 (RAAPTPRVAVRS) show a composition bias toward low complexity. Positions 80–500 (IIQNQPQVSP…YRPQPVLSPP (421 aa)) are flexible stalk domain. A compositionally biased stretch (polar residues) spans 267 to 281 (LSDSKTSAQRSNTSY). 4 stretches are compositionally biased toward basic and acidic residues: residues 307–319 (SEKD…EHVD), 329–338 (QGEEEQDHSQ), 356–371 (TEHH…SEKK), and 432–449 (PGAK…EIER). The span at 458-469 (AAEEEATDDESD) shows a compositional bias: acidic residues.

Belongs to the CENP-T/CNN1 family. Component of the CENPA-CAD complex, composed of CENPI, CENPK, CENPL, CENPO, CENPP, CENPQ, CENPR and CENPS. The CENPA-CAD complex is probably recruited on centromeres by the CENPA-NAC complex, at least composed of CENPA, CENPC, CENPH, CENPM, CENPN, CENPT and CENPU. Identified in a centromeric complex containing histones H2A, H2B, H3 and H4, and at least CENPA, CENPB, CENPC, CENPT, CENPN, HJURP, SUPT16H, SSRP1 and RSF1. Interacts (via N-terminus) with the NDC80 complex. Heterodimer with CENPW; this dimer coassembles with CENPS-CENPX heterodimers at centromeres to form the tetrameric CENP-T-W-S-X complex.

The protein resides in the nucleus. It localises to the chromosome. It is found in the centromere. Its subcellular location is the kinetochore. Functionally, component of the CENPA-NAC (nucleosome-associated) complex, a complex that plays a central role in assembly of kinetochore proteins, mitotic progression and chromosome segregation. The CENPA-NAC complex recruits the CENPA-CAD (nucleosome distal) complex and may be involved in incorporation of newly synthesized CENPA into centromeres. Part of a nucleosome-associated complex that binds specifically to histone H3-containing nucleosomes at the centromere, as opposed to nucleosomes containing CENPA. Component of the heterotetrameric CENP-T-W-S-X complex that binds and supercoils DNA, and plays an important role in kinetochore assembly. CENPT has a fundamental role in kinetochore assembly and function. It is one of the inner kinetochore proteins, with most further proteins binding downstream. Required for normal chromosome organization and normal progress through mitosis. The protein is Centromere protein T (CENPT) of Gallus gallus (Chicken).